Consider the following 452-residue polypeptide: tRNA modification GTPase MnmE (452 aa).

Residues Arg-28, Glu-85, and Lys-124 each coordinate (6S)-5-formyl-5,6,7,8-tetrahydrofolate. A TrmE-type G domain is found at 220-378 (GMNVVLVGRP…LRTELLRAAG (159 aa)). A K(+)-binding site is contributed by Asn-230. Residues 230–235 (NVGKSS), 249–255 (TDVAGTT), 274–277 (DTAG), and 359–361 (SAR) each bind GTP. Ser-234 lines the Mg(2+) pocket. Positions 249, 251, and 254 each coordinate K(+). Position 255 (Thr-255) interacts with Mg(2+). Lys-452 lines the (6S)-5-formyl-5,6,7,8-tetrahydrofolate pocket.

The protein belongs to the TRAFAC class TrmE-Era-EngA-EngB-Septin-like GTPase superfamily. TrmE GTPase family. As to quaternary structure, homodimer. Heterotetramer of two MnmE and two MnmG subunits. Requires K(+) as cofactor.

The protein localises to the cytoplasm. Exhibits a very high intrinsic GTPase hydrolysis rate. Involved in the addition of a carboxymethylaminomethyl (cmnm) group at the wobble position (U34) of certain tRNAs, forming tRNA-cmnm(5)s(2)U34. The sequence is that of tRNA modification GTPase MnmE from Azoarcus sp. (strain BH72).